A 231-amino-acid chain; its full sequence is Class A basic helix-loop-helix protein 9 (231 aa).

Residues 61–113 (ARRMAANVRERKRILDYNEAFNALRRALQHDLGGKRLSKIATLRRAIHRITAL) form the bHLH domain. Positions 135 to 168 (QAAQGSSTGNSSFSVPRSAPSPIAPSLTRRDIAS) are disordered. The segment covering 137–149 (AQGSSTGNSSFSV) has biased composition (polar residues).

As to quaternary structure, heterodimer. Efficient DNA binding requires dimerization with another bHLH protein. Interacts with TCF3, TCF4, and TCF12.

Its subcellular location is the nucleus. Its function is as follows. Transcription factor, which play a role in limb development. Is an essential player in the regulatory network governing transcription of genes implicated in limb morphogenesis. The polypeptide is Class A basic helix-loop-helix protein 9 (Bhlha9) (Mus musculus (Mouse)).